The following is a 566-amino-acid chain: Urease subunit alpha (566 aa).

The Urease domain occupies 129–566 (GGVDTHIHFI…LPLAQRYFLF (438 aa)). 3 residues coordinate Ni(2+): His134, His136, and Lys217. At Lys217 the chain carries N6-carboxylysine. Residue His219 coordinates substrate. The Ni(2+) site is built by His246 and His272. Catalysis depends on His320, which acts as the Proton donor. A Ni(2+)-binding site is contributed by Asp360.

It belongs to the metallo-dependent hydrolases superfamily. Urease alpha subunit family. In terms of assembly, heterotrimer of UreA (gamma), UreB (beta) and UreC (alpha) subunits. Three heterotrimers associate to form the active enzyme. Ni cation is required as a cofactor. Carboxylation allows a single lysine to coordinate two nickel ions.

Its subcellular location is the cytoplasm. The enzyme catalyses urea + 2 H2O + H(+) = hydrogencarbonate + 2 NH4(+). It functions in the pathway nitrogen metabolism; urea degradation; CO(2) and NH(3) from urea (urease route): step 1/1. This Janthinobacterium sp. (strain Marseille) (Minibacterium massiliensis) protein is Urease subunit alpha.